Consider the following 195-residue polypeptide: ATP-dependent Clp protease proteolytic subunit (195 aa).

S98 serves as the catalytic Nucleophile. The active site involves H123.

The protein belongs to the peptidase S14 family. In terms of assembly, fourteen ClpP subunits assemble into 2 heptameric rings which stack back to back to give a disk-like structure with a central cavity, resembling the structure of eukaryotic proteasomes.

The protein localises to the cytoplasm. It catalyses the reaction Hydrolysis of proteins to small peptides in the presence of ATP and magnesium. alpha-casein is the usual test substrate. In the absence of ATP, only oligopeptides shorter than five residues are hydrolyzed (such as succinyl-Leu-Tyr-|-NHMec, and Leu-Tyr-Leu-|-Tyr-Trp, in which cleavage of the -Tyr-|-Leu- and -Tyr-|-Trp bonds also occurs).. In terms of biological role, cleaves peptides in various proteins in a process that requires ATP hydrolysis. Has a chymotrypsin-like activity. Plays a major role in the degradation of misfolded proteins. The protein is ATP-dependent Clp protease proteolytic subunit of Caldanaerobacter subterraneus subsp. tengcongensis (strain DSM 15242 / JCM 11007 / NBRC 100824 / MB4) (Thermoanaerobacter tengcongensis).